The following is a 311-amino-acid chain: Ribonuclease Z (311 aa).

Zn(2+)-binding residues include H61, H63, D65, H66, H137, D207, and H263. The active-site Proton acceptor is D65.

It belongs to the RNase Z family. As to quaternary structure, homodimer. Zn(2+) is required as a cofactor.

It catalyses the reaction Endonucleolytic cleavage of RNA, removing extra 3' nucleotides from tRNA precursor, generating 3' termini of tRNAs. A 3'-hydroxy group is left at the tRNA terminus and a 5'-phosphoryl group is left at the trailer molecule.. Its function is as follows. Zinc phosphodiesterase, which displays some tRNA 3'-processing endonuclease activity. Probably involved in tRNA maturation, by removing a 3'-trailer from precursor tRNA. The polypeptide is Ribonuclease Z (Thermococcus onnurineus (strain NA1)).